A 341-amino-acid chain; its full sequence is L-threonine 3-dehydrogenase (341 aa).

C38 is a binding site for Zn(2+). Catalysis depends on charge relay system residues T40 and H43. Zn(2+) is bound by residues H63, E64, C93, C96, C99, and C107. Residues I175, D195, R200, 262-264 (LGI), and 286-287 (IY) contribute to the NAD(+) site.

This sequence belongs to the zinc-containing alcohol dehydrogenase family. Homotetramer. It depends on Zn(2+) as a cofactor.

It is found in the cytoplasm. It catalyses the reaction L-threonine + NAD(+) = (2S)-2-amino-3-oxobutanoate + NADH + H(+). Its pathway is amino-acid degradation; L-threonine degradation via oxydo-reductase pathway; glycine from L-threonine: step 1/2. In terms of biological role, catalyzes the NAD(+)-dependent oxidation of L-threonine to 2-amino-3-ketobutyrate. This chain is L-threonine 3-dehydrogenase, found in Solibacter usitatus (strain Ellin6076).